A 182-amino-acid polypeptide reads, in one-letter code: Putative manganese efflux pump MntP (182 aa).

Helical transmembrane passes span 6 to 26 (TVLV…GVGT), 37 to 57 (LSFH…FVGS), 59 to 79 (AADL…LFIG), 104 to 126 (SSLV…SFGI), 131 to 149 (LFLS…TWGA), and 164 to 181 (METV…KLLL).

The protein belongs to the MntP (TC 9.B.29) family.

It is found in the cell inner membrane. In terms of biological role, probably functions as a manganese efflux pump. This is Putative manganese efflux pump MntP from Syntrophobacter fumaroxidans (strain DSM 10017 / MPOB).